The chain runs to 66 residues: Large ribosomal subunit protein bL35 (66 aa).

Basic residues predominate over residues 1–28 (MPKMKTHRGSAKRFKRTGSGKLKRRHGF). Positions 1-50 (MPKMKTHRGSAKRFKRTGSGKLKRRHGFTSHMFANKSQKQKRKLRKSAMV) are disordered.

The protein belongs to the bacterial ribosomal protein bL35 family.

This Listeria monocytogenes serotype 4a (strain HCC23) protein is Large ribosomal subunit protein bL35.